The sequence spans 180 residues: ATP-dependent protease subunit HslV (180 aa).

Threonine 8 is a catalytic residue. Positions 165, 168, and 171 each coordinate Na(+).

This sequence belongs to the peptidase T1B family. HslV subfamily. In terms of assembly, a double ring-shaped homohexamer of HslV is capped on each side by a ring-shaped HslU homohexamer. The assembly of the HslU/HslV complex is dependent on binding of ATP.

It is found in the cytoplasm. It catalyses the reaction ATP-dependent cleavage of peptide bonds with broad specificity.. Its activity is regulated as follows. Allosterically activated by HslU binding. In terms of biological role, protease subunit of a proteasome-like degradation complex believed to be a general protein degrading machinery. This is ATP-dependent protease subunit HslV from Staphylococcus saprophyticus subsp. saprophyticus (strain ATCC 15305 / DSM 20229 / NCIMB 8711 / NCTC 7292 / S-41).